A 245-amino-acid chain; its full sequence is Thiopurine S-methyltransferase (245 aa).

Position 29–40 (29–40 (WREKWVDGKIGF)) interacts with S-adenosyl-L-methionine. Position 40 (Phe-40) interacts with substrate. An N6-acetyllysine modification is found at Lys-58. Leu-69, Glu-90, and Arg-152 together coordinate S-adenosyl-L-methionine.

Belongs to the class I-like SAM-binding methyltransferase superfamily. TPMT family. In terms of assembly, monomer.

The protein localises to the cytoplasm. The enzyme catalyses S-adenosyl-L-methionine + a thiopurine = S-adenosyl-L-homocysteine + a thiopurine S-methylether.. The chain is Thiopurine S-methyltransferase (TPMT) from Lynx rufus (Bobcat).